Consider the following 419-residue polypeptide: Protein FAM217A (419 aa).

Disordered regions lie at residues 1 to 23, 100 to 119, 234 to 298, and 362 to 388; these read MGRKSNESCSANPHSSSISQENL, DKRNSSVEENVTDESDLSES, PSSS…SRSL, and PIPLSFPENPREEVKVPRTKKKCHRKS. Over residues 7–23 the composition is skewed to polar residues; the sequence is ESCSANPHSSSISQENL. Residues 284–298 are compositionally biased toward polar residues; sequence SLSTAGKSKSNSRSL. Residues 378-388 show a composition bias toward basic residues; it reads PRTKKKCHRKS.

The protein belongs to the FAM217 family.

The polypeptide is Protein FAM217A (Fam217a) (Rattus norvegicus (Rat)).